The chain runs to 417 residues: Gamma-glutamyl phosphate reductase (417 aa).

It belongs to the gamma-glutamyl phosphate reductase family.

The protein resides in the cytoplasm. It carries out the reaction L-glutamate 5-semialdehyde + phosphate + NADP(+) = L-glutamyl 5-phosphate + NADPH + H(+). It functions in the pathway amino-acid biosynthesis; L-proline biosynthesis; L-glutamate 5-semialdehyde from L-glutamate: step 2/2. Functionally, catalyzes the NADPH-dependent reduction of L-glutamate 5-phosphate into L-glutamate 5-semialdehyde and phosphate. The product spontaneously undergoes cyclization to form 1-pyrroline-5-carboxylate. The chain is Gamma-glutamyl phosphate reductase from Shigella flexneri serotype 5b (strain 8401).